A 504-amino-acid chain; its full sequence is Paired zinc finger protein 1 (504 aa).

2 consecutive C2H2-type zinc fingers follow at residues 12–35 (LLCG…RQRH) and 39–62 (HMCL…KNKH). The segment at 68–91 (FICVCCNWSFGTEIYLKCHEECMK) adopts a C2H2-type 3; degenerate zinc-finger fold. Disordered regions lie at residues 115–136 (ALNT…SPVP) and 154–173 (IESA…LVSG). Polar residues predominate over residues 159 to 172 (RSSASTSTPRTLVS). C2H2-type zinc fingers lie at residues 179-202 (IPCG…RRFH) and 206-229 (HTCL…KSQH). A C2H2-type 6; degenerate zinc finger spans residues 235 to 258 (YNCLCCNWTFLNQVHLISHKTCLK). A C2H2-type 7 zinc finger spans residues 309-332 (LSCKSCGKFFYSERSLSKHHRQIH). The C2H2-type 8; degenerate zinc finger occupies 365-389 (FNCRCCNWSFATRRCLMSHVECLKK).

As to expression, expressed in proximal gonad.

Its function is as follows. Possible transcriptional regulator. Involved in promoting segregation of chromosomes during meiosis, perhaps acting downstream of the let-60 RAS / mpk-1 MAPK signaling pathway. The polypeptide is Paired zinc finger protein 1 (Caenorhabditis elegans).